The primary structure comprises 185 residues: uncharacterized protein (185 aa).

3 helical membrane passes run 9 to 29 (LVAAGLVLHIIQWIFILWAFL), 72 to 92 (VLFFALVLLIYGIVLHAILIV), and 111 to 131 (FFFIAAGVKLAILNITGIPFL).

The protein localises to the cell membrane. This is an uncharacterized protein from Bacillus subtilis (strain 168).